The following is a 556-amino-acid chain: Oxygen-dependent choline dehydrogenase (556 aa).

6–35 provides a ligand contact to FAD; it reads DYIIIGAGSAGNVLAARLTEDPGVTVLLLE. The active-site Proton acceptor is histidine 475.

Belongs to the GMC oxidoreductase family. The cofactor is FAD.

It carries out the reaction choline + A = betaine aldehyde + AH2. The enzyme catalyses betaine aldehyde + NAD(+) + H2O = glycine betaine + NADH + 2 H(+). Its pathway is amine and polyamine biosynthesis; betaine biosynthesis via choline pathway; betaine aldehyde from choline (cytochrome c reductase route): step 1/1. In terms of biological role, involved in the biosynthesis of the osmoprotectant glycine betaine. Catalyzes the oxidation of choline to betaine aldehyde and betaine aldehyde to glycine betaine at the same rate. This is Oxygen-dependent choline dehydrogenase from Xanthomonas euvesicatoria pv. vesicatoria (strain 85-10) (Xanthomonas campestris pv. vesicatoria).